A 73-amino-acid chain; its full sequence is Large ribosomal subunit protein uL24 (73 aa).

Basic and acidic residues predominate over residues 51-65 (DDNPKGGFIHKEKPM). Residues 51 to 73 (DDNPKGGFIHKEKPMHISNVKKA) are disordered.

The protein belongs to the universal ribosomal protein uL24 family. As to quaternary structure, part of the 50S ribosomal subunit.

Its function is as follows. One of two assembly initiator proteins, it binds directly to the 5'-end of the 23S rRNA, where it nucleates assembly of the 50S subunit. In terms of biological role, one of the proteins that surrounds the polypeptide exit tunnel on the outside of the subunit. The protein is Large ribosomal subunit protein uL24 of Helicobacter pylori (strain Shi470).